Consider the following 114-residue polypeptide: Cell division protein FtsB (114 aa).

Over Met1–Lys3 the chain is Cytoplasmic. The helical transmembrane segment at Leu4–Val21 threads the bilayer. Residues Gly22–His114 lie on the Periplasmic side of the membrane. The stretch at Arg31–Gly62 forms a coiled coil.

This sequence belongs to the FtsB family. Part of a complex composed of FtsB, FtsL and FtsQ.

Its subcellular location is the cell inner membrane. Essential cell division protein. May link together the upstream cell division proteins, which are predominantly cytoplasmic, with the downstream cell division proteins, which are predominantly periplasmic. In Edwardsiella ictaluri (strain 93-146), this protein is Cell division protein FtsB.